We begin with the raw amino-acid sequence, 744 residues long: Tripartite motif-containing protein 2 (744 aa).

The residue at position 10 (serine 10) is a Phosphoserine. The RING-type zinc-finger motif lies at 23–64 (CSICLERYKNPKVLPCLHTFCERCLQNYIPAHSLTLSCPVCR). The segment at 113–154 (GKPLSCPNHDGNVMEFYCQSCETAMCRECTEGEHAEHPTVPL) adopts a B box-type zinc-finger fold. The Zn(2+) site is built by cysteine 118, histidine 121, cysteine 141, and histidine 146. One copy of the Filamin repeat lies at 320-421 (TTNAVASETV…IRGSPFKLKV (102 aa)). At threonine 371 the chain carries Phosphothreonine. Phosphoserine occurs at positions 375, 424, and 428. Residues 432–462 (EGVKRRVKSPGSGHVKQKAVKRPASMYSTGK) are disordered. 6 NHL repeats span residues 473–516 (IFRV…FSND), 520–563 (KSRF…FSSD), 564–605 (GKFK…FQPN), 609–652 (VTRF…FNQE), 656–699 (MLKF…FDGS), and 700–743 (GSFL…YRYL).

Belongs to the TRIM/RBCC family. As to quaternary structure, forms homooligomers. Interacts with TRIM3; this interaction reduces TRIM2 activity. Interacts with myosin V; myosin V may not be a substrate for ubiquitination. Interacts with NEFL. Interacts with phosphorylated BCL2L11. Interacts with SIRPA. RING-type zinc finger-dependent and UBE2D1-dependent autoubiquitination.

The protein resides in the cytoplasm. The catalysed reaction is S-ubiquitinyl-[E2 ubiquitin-conjugating enzyme]-L-cysteine + [acceptor protein]-L-lysine = [E2 ubiquitin-conjugating enzyme]-L-cysteine + N(6)-ubiquitinyl-[acceptor protein]-L-lysine.. It functions in the pathway protein modification; protein ubiquitination. In terms of biological role, UBE2D1-dependent E3 ubiquitin-protein ligase that mediates the ubiquitination of NEFL and of phosphorylated BCL2L11. Plays a neuroprotective function. May play a role in neuronal rapid ischemic tolerance. Plays a role in antiviral immunity and limits New World arenavirus infection independently of its ubiquitin ligase activity. In Callithrix jacchus (White-tufted-ear marmoset), this protein is Tripartite motif-containing protein 2 (TRIM2).